The primary structure comprises 528 residues: GMP synthase [glutamine-hydrolyzing] (528 aa).

In terms of domain architecture, Glutamine amidotransferase type-1 spans Ala13 to Asp204. The active-site Nucleophile is the Cys90. Catalysis depends on residues His178 and Glu180. One can recognise a GMPS ATP-PPase domain in the interval Trp205–Arg403. Ser232–Ser238 serves as a coordination point for ATP.

In terms of assembly, homodimer.

The enzyme catalyses XMP + L-glutamine + ATP + H2O = GMP + L-glutamate + AMP + diphosphate + 2 H(+). The protein operates within purine metabolism; GMP biosynthesis; GMP from XMP (L-Gln route): step 1/1. Catalyzes the synthesis of GMP from XMP. This is GMP synthase [glutamine-hydrolyzing] from Synechococcus sp. (strain CC9311).